A 441-amino-acid chain; its full sequence is Lysine histidine transporter-like 2 (441 aa).

The Cytoplasmic portion of the chain corresponds to 1–32; sequence MEKSQSSPTKDASTKQKNVDDWLPITSSRNAK. A helical membrane pass occupies residues 33–53; it reads WWYSAFHNVTAMVGAGVLSLP. Over 54–58 the chain is Extracellular; the sequence is YAMSN. Residues 59–79 traverse the membrane as a helical segment; that stretch reads LGWGPGVTIMIMSWLITFYTL. Over 80-110 the chain is Cytoplasmic; that stretch reads WQMVQMHEMVPGKRFDRYHELGQHAFGEKLG. The helical transmembrane segment at 111-131 threads the bilayer; it reads LWIVVPQQLIVEVGVDIVYMV. At 132–155 the chain is on the extracellular side; it reads TGGKSLKKIHDLLCTDCKNIRTTY. 2 consecutive transmembrane segments (helical) span residues 156–176 and 177–197; these read WIMI…FNSI and SIVS…AWAT. Residues 198-222 lie on the Extracellular side of the membrane; that stretch reads SVKKGVHPNVDYSSRASTTSGNVFN. A helical transmembrane segment spans residues 223–243; it reads FLNALGDVAFAYAGHNVVLEI. At 244 to 264 the chain is on the cytoplasmic side; that stretch reads QATIPSTPEKPSKIAMWKGVV. The helical transmembrane segment at 265 to 285 threads the bilayer; sequence VAYIVVAICYFPVAFVCYYIF. At 286–300 the chain is on the extracellular side; that stretch reads GNSVDDNILMTLEKP. A helical membrane pass occupies residues 301-321; that stretch reads IWLIAIANAFVVVHVIGSYQI. At 322–347 the chain is on the cytoplasmic side; it reads YAMPVFDMLETFLVKKMMFAPSFKLR. Residues 348-370 form a helical membrane-spanning segment; that stretch reads FITRTLYVAFTMFVAICIPFFGG. The Extracellular portion of the chain corresponds to 371 to 373; that stretch reads LLG. The chain crosses the membrane as a helical span at residues 374–396; the sequence is FFGGFAFAPTTYYLPCIMWLCIK. Residues 397-406 are Cytoplasmic-facing; sequence KPKKYGLSWC. Residues 407 to 427 traverse the membrane as a helical segment; the sequence is INWFCIVVGVILTILAPIGGL. The Extracellular segment spans residues 428–441; it reads RTIIISAKNYEFFS.

It belongs to the amino acid/polyamine transporter 2 family. Amino acid/auxin permease (AAAP) (TC 2.A.18.2) subfamily.

The protein resides in the cell membrane. Functionally, amino acid transporter. The chain is Lysine histidine transporter-like 2 from Arabidopsis thaliana (Mouse-ear cress).